The sequence spans 1124 residues: Anillin (1124 aa).

Methionine 1 carries the N-acetylmethionine modification. The segment covering 1 to 25 has biased composition (basic and acidic residues); that stretch reads MDPFTEKLLERTRARRENLQRKMAE. The interval 1 to 45 is required for ubiquitination; that stretch reads MDPFTEKLLERTRARRENLQRKMAERPTAAPRSMTHAKRARQPLS. Disordered regions lie at residues 1–113 and 136–196; these read MDPF…ADTI and ATAA…ATPV. An interaction with CD2AP region spans residues 1–155; the sequence is MDPFTEKLLE…MQKLAEQRRR (155 aa). Residues 1-230 form a nuclear localization region; the sequence is MDPFTEKLLE…AKQNSVQEQP (230 aa). Serine 54 and serine 72 each carry phosphoserine. A compositionally biased stretch (polar residues) spans 77-96; sequence VEVSNLENKQPVESTSAKSC. Phosphoserine is present on residues serine 97 and serine 102. The segment covering 97–108 has biased composition (low complexity); that stretch reads SPSPVSPQVQPQ. Over residues 148 to 158 the composition is skewed to basic and acidic residues; that stretch reads KLAEQRRRWDN. Residues serine 172 and serine 182 each carry the phosphoserine modification. Phosphothreonine is present on threonine 194. Phosphoserine occurs at positions 225 and 252. Residues 231-676 are interaction with F-actin; sequence GTACLSKFSS…RDLLYSIDAY (446 aa). A Glycyl lysine isopeptide (Lys-Gly) (interchain with G-Cter in SUMO1) cross-link involves residue lysine 254. Serine 261 is subject to Phosphoserine. Polar residues predominate over residues 294-305; sequence TSPVKSTTSITD. The disordered stretch occupies residues 294–328; that stretch reads TSPVKSTTSITDAKSCEGQNPELLPKTPISPLKTG. The residue at position 320 (threonine 320) is a Phosphothreonine. A phosphoserine mark is found at serine 323 and serine 339. A Phosphothreonine modification is found at threonine 364. Lysine 371 is modified (N6-acetyllysine). The span at 380 to 389 shows a compositional bias: basic and acidic residues; sequence RCQEHSKESP. The tract at residues 380–399 is disordered; it reads RCQEHSKESPARSTPHRTPI. 2 positions are modified to phosphothreonine: threonine 397 and threonine 401. Residues serine 417, serine 419, serine 449, serine 485, serine 518, serine 553, and serine 561 each carry the phosphoserine modification. The stretch at 569–604 forms a coiled coil; that stretch reads FSDVLEEGELDMEKSQEEMDQALAESSEEQEDALNI. Disordered stretches follow at residues 579–600 and 625–664; these read DMEK…EQED and LVST…SLGS. 2 stretches are compositionally biased toward basic and acidic residues: residues 631–644 and 654–664; these read LELK…ESPK and PRAESGDSLGS. Residues serine 637, serine 642, serine 658, serine 661, and serine 664 each carry the phosphoserine modification. A Phosphotyrosine modification is found at tyrosine 671. Phosphoserine is present on residues serine 678, serine 688, serine 792, and serine 927. The segment at 730 to 1124 is localization to the cleavage furrow; sequence QQTVIYQASQ…DACYKPIGKP (395 aa). Residues 983–1107 form the PH domain; the sequence is SVEERGFLTI…WMQKLNQVLV (125 aa).

Interacts with F-actin. Interacts with CD2AP. May interact with RHOA. Interacts with FZR1/CDH1 during mitotic exit. In terms of processing, phosphorylated during mitosis. Ubiquitinated, and this requires FZR1/CDH1. Ubiquitously expressed. Present at highest levels in the brain, at high levels in the placenta and testis, at intermediate levels in the intestine, ovary, skeletal muscle and thymus and at lower levels in heart, kidney, liver, lung, pancreas, prostate and spleen. In the kidney, it is widely expressed in tubules, but sparsely expressed in the glomerulus. Expression is significantly increased in renal biopsy specimens from idiopathic FSGS. Overexpressed in many tumor types including breast, colorectal, endometrial, hepatic, kidney, lung, ovarian and pancreatic tumors.

Its subcellular location is the nucleus. It is found in the cytoplasm. It localises to the cytoskeleton. The protein resides in the cell cortex. The protein localises to the cell projection. Its subcellular location is the bleb. Required for cytokinesis. Essential for the structural integrity of the cleavage furrow and for completion of cleavage furrow ingression. Plays a role in bleb assembly during metaphase and anaphase of mitosis. May play a significant role in podocyte cell migration. The sequence is that of Anillin (ANLN) from Homo sapiens (Human).